Consider the following 404-residue polypeptide: Metacaspase-1 (404 aa).

The segment at 1 to 97 (MHHHHQQPSY…NPQAFGHGAP (97 aa)) is disordered. Active-site residues include His195 and Cys251.

This sequence belongs to the peptidase C14B family.

In terms of biological role, involved in cell death (apoptosis). The chain is Metacaspase-1 (casA) from Emericella nidulans (strain FGSC A4 / ATCC 38163 / CBS 112.46 / NRRL 194 / M139) (Aspergillus nidulans).